The following is a 938-amino-acid chain: Isoleucine--tRNA ligase (938 aa).

The 'HIGH' region signature appears at 58–68 (PYANGNIHIGH). E561 contributes to the L-isoleucyl-5'-AMP binding site. Residues 602-606 (KMSKS) carry the 'KMSKS' region motif. Residue K605 coordinates ATP. 4 residues coordinate Zn(2+): C901, C904, C921, and C924.

The protein belongs to the class-I aminoacyl-tRNA synthetase family. IleS type 1 subfamily. In terms of assembly, monomer. The cofactor is Zn(2+).

Its subcellular location is the cytoplasm. The enzyme catalyses tRNA(Ile) + L-isoleucine + ATP = L-isoleucyl-tRNA(Ile) + AMP + diphosphate. Catalyzes the attachment of isoleucine to tRNA(Ile). As IleRS can inadvertently accommodate and process structurally similar amino acids such as valine, to avoid such errors it has two additional distinct tRNA(Ile)-dependent editing activities. One activity is designated as 'pretransfer' editing and involves the hydrolysis of activated Val-AMP. The other activity is designated 'posttransfer' editing and involves deacylation of mischarged Val-tRNA(Ile). In Yersinia enterocolitica serotype O:8 / biotype 1B (strain NCTC 13174 / 8081), this protein is Isoleucine--tRNA ligase.